Reading from the N-terminus, the 295-residue chain is Ethanolamine ammonia-lyase small subunit (295 aa).

Val-207, Glu-228, and Cys-258 together coordinate adenosylcob(III)alamin.

The protein belongs to the EutC family. In terms of assembly, the basic unit is a heterodimer which dimerizes to form tetramers. The heterotetramers trimerize; 6 large subunits form a core ring with 6 small subunits projecting outwards. It depends on adenosylcob(III)alamin as a cofactor.

It localises to the bacterial microcompartment. It catalyses the reaction ethanolamine = acetaldehyde + NH4(+). It functions in the pathway amine and polyamine degradation; ethanolamine degradation. Its function is as follows. Catalyzes the deamination of various vicinal amino-alcohols to oxo compounds. Allows this organism to utilize ethanolamine as the sole source of nitrogen and carbon in the presence of external vitamin B12. This chain is Ethanolamine ammonia-lyase small subunit, found in Escherichia coli (strain 55989 / EAEC).